The chain runs to 117 residues: Ubiquitin-like protein 3 (117 aa).

In terms of domain architecture, Ubiquitin-like spans 10 to 88; sequence INLRLILVSG…PFGKTTVMHL (79 aa). Cysteine 113 carries S-palmitoyl cysteine lipidation. Cysteine 114 is modified (cysteine methyl ester). The S-geranylgeranyl cysteine moiety is linked to residue cysteine 114. Positions 115 to 117 are cleaved as a propeptide — removed in mature form; sequence VIL.

The protein localises to the cell membrane. The polypeptide is Ubiquitin-like protein 3 (UBL3) (Bos taurus (Bovine)).